The following is a 202-amino-acid chain: ATP-dependent Clp protease proteolytic subunit (202 aa).

Catalysis depends on Ser101, which acts as the Nucleophile. His126 is a catalytic residue.

The protein belongs to the peptidase S14 family. Component of the chloroplastic Clp protease core complex.

Its subcellular location is the plastid. It is found in the chloroplast stroma. The catalysed reaction is Hydrolysis of proteins to small peptides in the presence of ATP and magnesium. alpha-casein is the usual test substrate. In the absence of ATP, only oligopeptides shorter than five residues are hydrolyzed (such as succinyl-Leu-Tyr-|-NHMec, and Leu-Tyr-Leu-|-Tyr-Trp, in which cleavage of the -Tyr-|-Leu- and -Tyr-|-Trp bonds also occurs).. Functionally, cleaves peptides in various proteins in a process that requires ATP hydrolysis. Has a chymotrypsin-like activity. Plays a major role in the degradation of misfolded proteins. This Drimys granadensis protein is ATP-dependent Clp protease proteolytic subunit.